A 312-amino-acid polypeptide reads, in one-letter code: Very-long-chain 3-oxoacyl-CoA reductase (312 aa).

A helical transmembrane segment spans residues 4-24; that stretch reads ALPAAGFLYWVGAGTVAYLAL. Position 50–79 (50–79) interacts with NADP(+); the sequence is GEWAVVTGGTDGIGKSYAEELAKRGMKVVL. The next 2 helical transmembrane spans lie at 182 to 202 and 271 to 291; these read GAIL…LTIY and GYLI…WIYL. Ser-189 contributes to the substrate binding site. The active-site Proton acceptor is the Tyr-202. Residues 308–312 carry the Di-lysine motif motif; the sequence is KIKKN.

It belongs to the short-chain dehydrogenases/reductases (SDR) family. 17-beta-HSD 3 subfamily.

It is found in the endoplasmic reticulum membrane. The enzyme catalyses a very-long-chain (3R)-3-hydroxyacyl-CoA + NADP(+) = a very-long-chain 3-oxoacyl-CoA + NADPH + H(+). It carries out the reaction 17beta-estradiol + NAD(+) = estrone + NADH + H(+). The catalysed reaction is 17beta-estradiol + NADP(+) = estrone + NADPH + H(+). It catalyses the reaction 3-oxooctadecanoyl-CoA + NADPH + H(+) = (3R)-hydroxyoctadecanoyl-CoA + NADP(+). The enzyme catalyses (7Z,10Z,13Z,16Z)-3-oxodocosatetraenoyl-CoA + NADPH + H(+) = (3R)-hydroxy-(7Z,10Z,13Z,16Z)-docosatetraenoyl-CoA + NADP(+). It carries out the reaction 3-oxo-(7Z,10Z,13Z,16Z,19Z)-docosapentaenoyl-CoA + NADPH + H(+) = (3R)-hydroxy-(7Z,10Z,13Z,16Z,19Z)-docosapentaenoyl-CoA + NADP(+). The catalysed reaction is (8Z,11Z,14Z)-3-oxoeicosatrienoyl-CoA + NADPH + H(+) = (3R)-hydroxy-(8Z,11Z,14Z)-eicosatrienoyl-CoA + NADP(+). It functions in the pathway lipid metabolism; fatty acid biosynthesis. It participates in steroid biosynthesis; estrogen biosynthesis. Catalyzes the second of the four reactions of the long-chain fatty acids elongation cycle. This endoplasmic reticulum-bound enzymatic process, allows the addition of two carbons to the chain of long- and very long-chain fatty acids/VLCFAs per cycle. This enzyme has a 3-ketoacyl-CoA reductase activity, reducing 3-ketoacyl-CoA to 3-hydroxyacyl-CoA, within each cycle of fatty acid elongation. Thereby, it may participate in the production of VLCFAs of different chain lengths that are involved in multiple biological processes as precursors of membrane lipids and lipid mediators. May also catalyze the transformation of estrone (E1) into estradiol (E2) and play a role in estrogen formation. This Macaca fascicularis (Crab-eating macaque) protein is Very-long-chain 3-oxoacyl-CoA reductase (HSD17B12).